The chain runs to 128 residues: Ribonuclease P protein component (128 aa).

Belongs to the RnpA family. Consists of a catalytic RNA component (M1 or rnpB) and a protein subunit.

It carries out the reaction Endonucleolytic cleavage of RNA, removing 5'-extranucleotides from tRNA precursor.. Its function is as follows. RNaseP catalyzes the removal of the 5'-leader sequence from pre-tRNA to produce the mature 5'-terminus. It can also cleave other RNA substrates such as 4.5S RNA. The protein component plays an auxiliary but essential role in vivo by binding to the 5'-leader sequence and broadening the substrate specificity of the ribozyme. In Prochlorococcus marinus (strain MIT 9301), this protein is Ribonuclease P protein component.